Consider the following 368-residue polypeptide: MAPRTLLLLLAAALAPTQTRAGPHSLRYFVTAVSRPGLGKPRYMEVGYVDNTEFVRFDSDAENPRMKPRVRWMEQEGPEYWEQETQNAKDHEQSFRVSLRNLLGYYNQSKGGSHTIQGMRGCDVGSDWRLLRGYEQFAYDGPDYIALNEDLKTWTAADMAAQITRRKWEQAGAAETLRAYLEGACVEWLRRYLELGNATLLCTDPPKAHVTHHPRSEGKVTLRCWALGFYPADITLTWQLNGEELTQDMELVETRPAGDGTFQKWAALVVPLGKEQNYTCHVEHEGLPEPLTLRWEPPPSTDSYMVIVAVLVVLGAVFIIGAVVAFVMMMRRNTGGKGGDYTLAPGSQSSEMSLRDCKVMVHDSHSLA.

An N-terminal signal peptide occupies residues 1-21 (MAPRTLLLLLAAALAPTQTRA). The segment at 22–111 (GPHSLRYFVT…LLGYYNQSKG (90 aa)) is alpha-1. The Extracellular portion of the chain corresponds to 22-303 (GPHSLRYFVT…RWEPPPSTDS (282 aa)). Asn-107 is a glycosylation site (N-linked (GlcNAc...) asparagine). The alpha-2 stretch occupies residues 112–203 (GSHTIQGMRG…ELGNATLLCT (92 aa)). A disulfide bridge links Cys-122 with Cys-185. Asn-197 and Asn-277 each carry an N-linked (GlcNAc...) asparagine glycan. Residues 204-295 (DPPKAHVTHH…GLPEPLTLRW (92 aa)) form an alpha-3 region. One can recognise an Ig-like C1-type domain in the interval 206-294 (PKAHVTHHPR…EGLPEPLTLR (89 aa)). A disulfide bridge links Cys-224 with Cys-280. The interval 296 to 303 (EPPPSTDS) is connecting peptide. Residues 304–330 (YMVIVAVLVVLGAVFIIGAVVAFVMMM) form a helical membrane-spanning segment. The Cytoplasmic segment spans residues 331 to 368 (RRNTGGKGGDYTLAPGSQSSEMSLRDCKVMVHDSHSLA). A phosphoserine mark is found at Ser-350 and Ser-353.

It belongs to the MHC class I family. As to quaternary structure, heterodimer of an alpha chain and a beta chain (beta-2-microglobulin).

It is found in the membrane. In terms of biological role, involved in the presentation of foreign antigens to the immune system. The chain is H-2 class I histocompatibility antigen, D-P alpha chain (H2-D1) from Mus musculus (Mouse).